A 612-amino-acid polypeptide reads, in one-letter code: Zinc metalloproteinase-disintegrin-like 2d (612 aa).

An N-terminal signal peptide occupies residues 1–20; that stretch reads MIQVLLVTICLAVFPYQGSS. A propeptide spanning residues 21 to 189 is cleaved from the precursor; the sequence is IILGSGNVND…KKASQLNLTP (169 aa). Residues 199 to 395 form the Peptidase M12B domain; that stretch reads KYIELVIVAD…NRPPCILNKP (197 aa). Glu202 contacts Ca(2+). Residue Asn218 is glycosylated (N-linked (GlcNAc...) asparagine). A Ca(2+)-binding site is contributed by Asp286. 3 cysteine pairs are disulfide-bonded: Cys310-Cys390, Cys350-Cys374, and Cys352-Cys357. Zn(2+) is bound at residue His335. Glu336 is an active-site residue. Zn(2+)-binding residues include His339 and His345. Cys390, Asn393, Val405, Asn408, Phe410, Glu412, Glu415, and Asp418 together coordinate Ca(2+). Residues 403 to 489 form the Disintegrin domain; sequence PPVCGNYFVE…DCPTDNFQRN (87 aa). Intrachain disulfides connect Cys406-Cys435, Cys417-Cys430, Cys419-Cys425, Cys429-Cys452, Cys443-Cys449, Cys448-Cys474, Cys461-Cys481, Cys468-Cys500, Cys493-Cys505, Cys512-Cys562, Cys527-Cys573, Cys540-Cys550, Cys557-Cys599, and Cys593-Cys605. The short motif at 467-469 is the D/ECD-tripeptide element; the sequence is ECD.

It belongs to the venom metalloproteinase (M12B) family. P-III subfamily. The cofactor is Zn(2+). As to expression, expressed by the venom gland.

The protein localises to the secreted. In terms of biological role, snake venom metalloproteinase that impairs hemostasis in the envenomed animal. This Crotalus adamanteus (Eastern diamondback rattlesnake) protein is Zinc metalloproteinase-disintegrin-like 2d.